We begin with the raw amino-acid sequence, 451 residues long: Glycosyltransferase-like At2g41451 (451 aa).

Positions 1–23 (MASSDSSYSRKFLLITFLPLSLA) are cleaved as a signal peptide. Asparagine 36, asparagine 137, asparagine 168, asparagine 441, and asparagine 444 each carry an N-linked (GlcNAc...) asparagine glycan. Residues 109 to 345 (QTLPWIFYHK…TYSKFSDLTS (237 aa)) form the GT92 domain.

It belongs to the glycosyltransferase 92 family.

The protein resides in the secreted. Its subcellular location is the cell wall. It localises to the cytoplasm. It is found in the cell membrane. Involved in the coordination between cell elongation and cellulose synthesis by promoting the expression of genes involved in cell elongation and cellulose synthesis. Acts as a regulator of plasmodesmatal permeability. Maybe a glycosyltransferase. This is Glycosyltransferase-like At2g41451 from Arabidopsis thaliana (Mouse-ear cress).